The sequence spans 606 residues: Sulfite reductase [NADPH] flavoprotein alpha-component (606 aa).

One can recognise a Flavodoxin-like domain in the interval isoleucine 68–threonine 206. Residues serine 74–alanine 79, serine 121–glycine 124, and leucine 157–alanine 166 contribute to the FMN site. An FAD-binding FR-type domain is found at glutamate 240 to proline 454. Residues threonine 328, glutamine 362, arginine 392–serine 395, threonine 410–glycine 412, tyrosine 416, and glycine 425–serine 428 contribute to the FAD site. Residues serine 525–arginine 526, lysine 531–glutamine 535, and aspartate 568 each bind NADP(+). Tyrosine 606 contacts FAD.

The protein belongs to the NADPH-dependent sulphite reductase flavoprotein subunit CysJ family. This sequence in the N-terminal section; belongs to the flavodoxin family. It in the C-terminal section; belongs to the flavoprotein pyridine nucleotide cytochrome reductase family. Alpha(8)-beta(8). The alpha component is a flavoprotein, the beta component is a hemoprotein. The cofactor is FAD. FMN serves as cofactor.

The enzyme catalyses hydrogen sulfide + 3 NADP(+) + 3 H2O = sulfite + 3 NADPH + 4 H(+). It functions in the pathway sulfur metabolism; hydrogen sulfide biosynthesis; hydrogen sulfide from sulfite (NADPH route): step 1/1. Component of the sulfite reductase complex that catalyzes the 6-electron reduction of sulfite to sulfide. This is one of several activities required for the biosynthesis of L-cysteine from sulfate. The flavoprotein component catalyzes the electron flow from NADPH -&gt; FAD -&gt; FMN to the hemoprotein component. The sequence is that of Sulfite reductase [NADPH] flavoprotein alpha-component from Zymomonas mobilis subsp. mobilis (strain ATCC 31821 / ZM4 / CP4).